Consider the following 999-residue polypeptide: Sarcoplasmic/endoplasmic reticulum calcium ATPase 3 (999 aa).

Over 1 to 48 (MEAAHSVPVQDVLSRFGVAESCGLSPEQVRRNREKYGPNELPAEERKS) the chain is Cytoplasmic. A helical membrane pass occupies residues 49–69 (LWELVLEQFEDLLVRILLMAA). Over 70 to 89 (FLSFILAWFEEGEESTTAFV) the chain is Lumenal. Residues 90–110 (EPIVIIMILIANAVVGVWQER) traverse the membrane as a helical segment. Over 111 to 253 (NAESAIEALK…PEKTPLQQKL (143 aa)) the chain is Cytoplasmic. The helical transmembrane segment at 254 to 273 (DEFSQQLSKVIFLVCIAVWV) threads the bilayer. The Lumenal portion of the chain corresponds to 274–295 (INISHFSDPVHGGSWFRGAIYY). The chain crosses the membrane as a helical span at residues 296–313 (FKTSVALAVAAIPEGLPA). Val304, Ala305, Ile307, and Glu309 together coordinate Ca(2+). Residues 314–757 (VITTCLALGT…EEGRAIYNNM (444 aa)) are Cytoplasmic-facing. Asp351 functions as the 4-aspartylphosphate intermediate in the catalytic mechanism. Residues Asp351 and Thr353 each coordinate Mg(2+). Position 353 (Thr353) interacts with ATP. The interaction with phospholamban 1 stretch occupies residues 370–400 (EKVEGTQCSLHEFSITGSTYAPEGQILKDEK). Residues Glu442, Arg489, Lys515, Arg560, Thr625, Gly626, Asp627, Arg678, and Lys684 each coordinate ATP. Asp703 lines the Mg(2+) pocket. An ATP-binding site is contributed by Asn706. Residues 758–777 (KQFIRYLISSNVGEVVCIFL) form a helical membrane-spanning segment. Asn768 and Glu771 together coordinate Ca(2+). The Lumenal portion of the chain corresponds to 778-787 (TAILGLPEAL). A helical transmembrane segment spans residues 788–808 (IPVQLLWVNLVTDGLPATALG). An interaction with phospholamban 2 region spans residues 788–808 (IPVQLLWVNLVTDGLPATALG). Ca(2+) contacts are provided by Asn796, Thr799, and Asp800. Over 809 to 828 (FNPPDLDIMDKLPRNPKEPL) the chain is Cytoplasmic. The helical transmembrane segment at 829–851 (ISGWLFFRYLAIGVYVGLATVGA) threads the bilayer. Residues 852 to 897 (ATWWFLYDAEGPQVSFHQLRNFMRCTEDNPIFEGVNCEIFESRYPT) are Lumenal-facing. Residues 898 to 917 (TMALSVLVTIEMCNALNSVS) traverse the membrane as a helical segment. Glu908 serves as a coordination point for Ca(2+). Topologically, residues 918–930 (ENQSLLRMPPWLN) are cytoplasmic. Residues 931–949 (IWLLGAIVMSMALHFFILY) traverse the membrane as a helical segment. Topologically, residues 950-964 (VKPMPLIFQVTPLSW) are lumenal. The helical transmembrane segment at 965 to 985 (PQWVVVLKISLPVILLDEGLK) threads the bilayer. The Cytoplasmic segment spans residues 986-999 (YLSRNHLEGEEDKK).

The protein belongs to the cation transport ATPase (P-type) (TC 3.A.3) family. Type IIA subfamily. As to quaternary structure, interacts with sarcolipin (SLN). Interacts with phospholamban (PLN). Interacts with myoregulin (MRLN). Interacts with DWORF. It depends on Mg(2+) as a cofactor. As to expression, found in spleen, lung, intestine and brain.

The protein localises to the endoplasmic reticulum membrane. Its subcellular location is the sarcoplasmic reticulum membrane. The catalysed reaction is Ca(2+)(in) + ATP + H2O = Ca(2+)(out) + ADP + phosphate + H(+). Its activity is regulated as follows. Inhibited by sarcolipin (SLN), phospholamban (PLN) and myoregulin (MRLN). Enhanced by DWORF; DWORF increases activity by displacing sarcolipin (SLN), phospholamban (PLN) and myoregulin (MRLN). Its function is as follows. This magnesium-dependent enzyme catalyzes the hydrolysis of ATP coupled with the transport of calcium. Transports calcium ions from the cytosol into the sarcoplasmic/endoplasmic reticulum lumen. Contributes to calcium sequestration involved in muscular excitation/contraction. The protein is Sarcoplasmic/endoplasmic reticulum calcium ATPase 3 (ATP2A3) of Gallus gallus (Chicken).